A 168-amino-acid chain; its full sequence is Thiol peroxidase (168 aa).

The Thioredoxin domain maps to 19–168; sequence PQAGSKAQAF…YDAALNVLKA (150 aa). Catalysis depends on cysteine 61, which acts as the Cysteine sulfenic acid (-SOH) intermediate. A disulfide bridge connects residues cysteine 61 and cysteine 95.

The protein belongs to the peroxiredoxin family. Tpx subfamily. As to quaternary structure, homodimer.

It carries out the reaction a hydroperoxide + [thioredoxin]-dithiol = an alcohol + [thioredoxin]-disulfide + H2O. Its function is as follows. Thiol-specific peroxidase that catalyzes the reduction of hydrogen peroxide and organic hydroperoxides to water and alcohols, respectively. Plays a role in cell protection against oxidative stress by detoxifying peroxides. This chain is Thiol peroxidase, found in Salmonella typhimurium (strain LT2 / SGSC1412 / ATCC 700720).